Reading from the N-terminus, the 269-residue chain is MVKISFQPAVAGVKAEKADKAAASGPASASAPAAEILLTPAREERPPRHRSRKGGSVGGVCYLSMGMVVLLMGLVFASVYIYRYFFLAQLARDNFFHCGVLYEDSLSSQIRTRLELEEDVKIYLEENYERINVPVPQFGGGDPADIIHDFQRGLTAYHDISLDKCYVIELNTTIVLPPRNFWELLMNVKRGTYLPQTYIIQEEMVVTEHVRDKEALGSFIYHLCNGKDTYRLRRRATRRRINKRGAKNCNAIRHFENTFVVETLICGVV.

Threonine 39 is modified (phosphothreonine). Residues 57 to 77 traverse the membrane as a helical; Signal-anchor for type II membrane protein segment; that stretch reads VGGVCYLSMGMVVLLMGLVFA. In terms of domain architecture, BRICHOS spans 138–232; that stretch reads FGGGDPADII…LCNGKDTYRL (95 aa). Residues cysteine 165 and cysteine 224 are joined by a disulfide bond. N-linked (GlcNAc...) asparagine glycosylation is present at asparagine 171.

It belongs to the ITM2 family. In terms of assembly, interacts with BACE1. Interacts with APP. Interacts with STMN2. In terms of processing, type I membrane-bound, as well as soluble, furin has a pre-eminent role in ITM2C proteolytic processing. PCSK7 and PCSK5 may also be involved although to a lesser extent. The soluble form of PCSK7 is incapable of processing ITM2C. Fails to undergo shedding by ADAM10 and intramembrane cleavage by SPPL2B.

It localises to the lysosome membrane. The protein localises to the cell membrane. Its function is as follows. Negative regulator of amyloid-beta peptide production. May inhibit the processing of APP by blocking its access to alpha- and beta-secretase. Binding to the beta-secretase-cleaved APP C-terminal fragment is negligible, suggesting that ITM2C is a poor gamma-secretase cleavage inhibitor. May play a role in TNF-induced cell death and neuronal differentiation. This chain is Integral membrane protein 2C (Itm2c), found in Rattus norvegicus (Rat).